We begin with the raw amino-acid sequence, 717 residues long: Polyribonucleotide nucleotidyltransferase (717 aa).

Residues aspartate 486 and aspartate 492 each coordinate Mg(2+). The 60-residue stretch at 553-612 (PKIIQLQIDIDKISLVIGSTGKTVKAITDEFEVRVQIEQDGRITLFGTDSLKMQKAKARI) folds into the KH domain. Residues 622-715 (GEIYEGVVKK…KFGKIELELV (94 aa)) form the S1 motif domain. A disordered region spans residues 650–683 (SNRPKSRDDRYGDMRHSRYGSGRHSRYGRDSRNT). Over residues 654–665 (KSRDDRYGDMRH) the composition is skewed to basic and acidic residues. Over residues 666–675 (SRYGSGRHSR) the composition is skewed to basic residues.

Belongs to the polyribonucleotide nucleotidyltransferase family. Requires Mg(2+) as cofactor.

The protein localises to the cytoplasm. It catalyses the reaction RNA(n+1) + phosphate = RNA(n) + a ribonucleoside 5'-diphosphate. In terms of biological role, involved in mRNA degradation. Catalyzes the phosphorolysis of single-stranded polyribonucleotides processively in the 3'- to 5'-direction. This is Polyribonucleotide nucleotidyltransferase from Borrelia turicatae (strain 91E135).